The primary structure comprises 367 residues: Phospho-N-acetylmuramoyl-pentapeptide-transferase (367 aa).

Helical transmembrane passes span 16-36 (LLLA…WVHF), 62-82 (TMGG…FNLV), 87-107 (MLLP…DDWL), 125-145 (FWIM…PQPY), 158-178 (VGEV…IVFI), 190-210 (SLAG…TFLA), 214-234 (LTNL…FLWY), 240-260 (QVFM…VVAL), 264-284 (QWIL…STLI), and 326-346 (FVLI…IFGS).

The protein belongs to the glycosyltransferase 4 family. MraY subfamily. It depends on Mg(2+) as a cofactor.

It localises to the cell membrane. The enzyme catalyses UDP-N-acetyl-alpha-D-muramoyl-L-alanyl-gamma-D-glutamyl-meso-2,6-diaminopimeloyl-D-alanyl-D-alanine + di-trans,octa-cis-undecaprenyl phosphate = di-trans,octa-cis-undecaprenyl diphospho-N-acetyl-alpha-D-muramoyl-L-alanyl-D-glutamyl-meso-2,6-diaminopimeloyl-D-alanyl-D-alanine + UMP. It functions in the pathway cell wall biogenesis; peptidoglycan biosynthesis. Its function is as follows. Catalyzes the initial step of the lipid cycle reactions in the biosynthesis of the cell wall peptidoglycan: transfers peptidoglycan precursor phospho-MurNAc-pentapeptide from UDP-MurNAc-pentapeptide onto the lipid carrier undecaprenyl phosphate, yielding undecaprenyl-pyrophosphoryl-MurNAc-pentapeptide, known as lipid I. In Chloroflexus aggregans (strain MD-66 / DSM 9485), this protein is Phospho-N-acetylmuramoyl-pentapeptide-transferase.